A 367-amino-acid polypeptide reads, in one-letter code: Quinolinate synthase (367 aa).

H64 and S82 together coordinate iminosuccinate. C127 contributes to the [4Fe-4S] cluster binding site. Residues 153–155 (YVN) and S170 each bind iminosuccinate. C216 serves as a coordination point for [4Fe-4S] cluster. Iminosuccinate is bound by residues 242–244 (HPE) and T259. C302 is a [4Fe-4S] cluster binding site.

This sequence belongs to the quinolinate synthase family. Type 2 subfamily. Requires [4Fe-4S] cluster as cofactor.

The protein resides in the cytoplasm. The enzyme catalyses iminosuccinate + dihydroxyacetone phosphate = quinolinate + phosphate + 2 H2O + H(+). Its pathway is cofactor biosynthesis; NAD(+) biosynthesis; quinolinate from iminoaspartate: step 1/1. Functionally, catalyzes the condensation of iminoaspartate with dihydroxyacetone phosphate to form quinolinate. This Caulobacter vibrioides (strain ATCC 19089 / CIP 103742 / CB 15) (Caulobacter crescentus) protein is Quinolinate synthase.